A 346-amino-acid polypeptide reads, in one-letter code: 2,5-dichlorohydroquinone reductive dechlorinase (346 aa).

The 112-residue stretch at 43–154 folds into the GST N-terminal domain; the sequence is PRFELFHFVF…YLCDALSGGT (112 aa). The GST C-terminal domain maps to 189–335; the sequence is DRRPESMQAV…AIIQWPGHPP (147 aa).

Belongs to the GST superfamily.

It carries out the reaction 2,5-dichlorohydroquinone + 2 glutathione = chlorohydroquinone + glutathione disulfide + chloride + H(+). It catalyses the reaction chlorohydroquinone + 2 glutathione = hydroquinone + glutathione disulfide + chloride + H(+). The protein operates within xenobiotic degradation; gamma-hexachlorocyclohexane degradation. Catalyzes the degradation of 2,5-dichlorohydroquinone (2,5-DCHQ) into hydroquinone (HQ) via chlorohydroquinone (CHQ). The protein is 2,5-dichlorohydroquinone reductive dechlorinase of Sphingobium indicum (strain DSM 16412 / CCM 7286 / MTCC 6364 / B90A).